We begin with the raw amino-acid sequence, 240 residues long: Aldehyde dehydrogenase, cytosolic 2 (240 aa).

Active-site residues include Glu8 and Cys42. 4 positions are modified to N6-acetyllysine: Lys106, Lys149, Lys151, and Lys174.

It belongs to the aldehyde dehydrogenase family. In terms of assembly, homotetramer. Non-lens specific, predominant form expressed in the liver.

Its subcellular location is the cytoplasm. The catalysed reaction is an aldehyde + NAD(+) + H2O = a carboxylate + NADH + 2 H(+). It participates in alcohol metabolism; ethanol degradation; acetate from ethanol: step 2/2. Functionally, elephant shrews, in contrast to other mammals, possess both a lens- and a non-lens specific class-1 aldehyde dehydrogenase. Can convert/oxidize retinaldehyde to retinoic acid. The sequence is that of Aldehyde dehydrogenase, cytosolic 2 from Macroscelides proboscideus (Short-eared elephant shrew).